The chain runs to 324 residues: Lactonase drp35 (324 aa).

Glu47, Ser109, Gly111, Asp129, Thr132, Tyr134, Asp137, Asn184, Asp235, and Ser236 together coordinate Ca(2+). Residue Asp235 is the Proton donor of the active site.

It belongs to the SMP-30/CGR1 family. Ca(2+) serves as cofactor.

It localises to the cytoplasm. Its function is as follows. Exhibits lactonase activity. Acts in cells with perturbed membrane integrity and is possibly related to the membrane homeostasis. The chain is Lactonase drp35 (drp35) from Staphylococcus aureus (strain bovine RF122 / ET3-1).